The following is a 147-amino-acid chain: D-aminoacyl-tRNA deacylase (147 aa).

The Gly-cisPro motif, important for rejection of L-amino acids signature appears at 139–140 (GP).

This sequence belongs to the DTD family. Homodimer.

It localises to the cytoplasm. The enzyme catalyses glycyl-tRNA(Ala) + H2O = tRNA(Ala) + glycine + H(+). It carries out the reaction a D-aminoacyl-tRNA + H2O = a tRNA + a D-alpha-amino acid + H(+). An aminoacyl-tRNA editing enzyme that deacylates mischarged D-aminoacyl-tRNAs. Also deacylates mischarged glycyl-tRNA(Ala), protecting cells against glycine mischarging by AlaRS. Acts via tRNA-based rather than protein-based catalysis; rejects L-amino acids rather than detecting D-amino acids in the active site. By recycling D-aminoacyl-tRNA to D-amino acids and free tRNA molecules, this enzyme counteracts the toxicity associated with the formation of D-aminoacyl-tRNA entities in vivo and helps enforce protein L-homochirality. In Rippkaea orientalis (strain PCC 8801 / RF-1) (Cyanothece sp. (strain PCC 8801)), this protein is D-aminoacyl-tRNA deacylase.